Here is a 397-residue protein sequence, read N- to C-terminus: DNA-directed RNA polymerase subunit Rpo1C (397 aa).

It belongs to the RNA polymerase beta' chain family. In terms of assembly, part of the RNA polymerase complex. An artificial construct of the RNAP clamp domain (including part of this protein) contacts transcription elongation factors Spt4 and Spt5.

It is found in the cytoplasm. It catalyses the reaction RNA(n) + a ribonucleoside 5'-triphosphate = RNA(n+1) + diphosphate. Functionally, DNA-dependent RNA polymerase (RNAP) catalyzes the transcription of DNA into RNA using the four ribonucleoside triphosphates as substrates. Forms part of the jaw domain. In Pyrococcus furiosus (strain ATCC 43587 / DSM 3638 / JCM 8422 / Vc1), this protein is DNA-directed RNA polymerase subunit Rpo1C.